Here is a 401-residue protein sequence, read N- to C-terminus: tRNA(Met) cytidine acetate ligase (401 aa).

ATP-binding positions include 7–20 (IVEY…HLYH), Gly102, Asn164, and Arg189.

The protein belongs to the TmcAL family.

Its subcellular location is the cytoplasm. The enzyme catalyses cytidine(34) in elongator tRNA(Met) + acetate + ATP = N(4)-acetylcytidine(34) in elongator tRNA(Met) + AMP + diphosphate. Catalyzes the formation of N(4)-acetylcytidine (ac(4)C) at the wobble position of elongator tRNA(Met), using acetate and ATP as substrates. First activates an acetate ion to form acetyladenylate (Ac-AMP) and then transfers the acetyl group to tRNA to form ac(4)C34. The chain is tRNA(Met) cytidine acetate ligase from Thermoanaerobacter sp. (strain X514).